The primary structure comprises 490 residues: Sec sixty-one protein homolog (490 aa).

Topologically, residues 1-32 are cytoplasmic; that stretch reads MSGFRLIDIVKPILPILPEVELPFEKLPFDDK. Residues 33 to 53 traverse the membrane as a helical segment; the sequence is IVYTIFAGLIYLFAQFPLVGL. At 54 to 121 the chain is on the lumenal side; that stretch reads PKATTPNVND…DRELFQSLTK (68 aa). Residues 122–142 traverse the membrane as a helical segment; that stretch reads VFAIVQYVILTNIFIFAGYFG. Residues 143 to 146 are Cytoplasmic-facing; it reads DDLS. A helical transmembrane segment spans residues 147–167; it reads VVQIGLINFQLVGAGIFTTLL. The Lumenal segment spans residues 168-174; that stretch reads AEVIDKG. Residues 175–195 traverse the membrane as a helical segment; the sequence is FGFSSGAMIINTVVIATNLVA. Topologically, residues 196–242 are cytoplasmic; the sequence is DTFGVSQIKVGEDDQTEAQGALINLIQGLRSKHKTFIGGIISAFNRD. A helical transmembrane segment spans residues 243-263; that stretch reads YLPNLTTTIIVLAIAIIVCYL. Over 264 to 293 the chain is Lumenal; that stretch reads QSVRVELPIRSTRARGTNNVYPIKLLYTGC. A helical membrane pass occupies residues 294–314; the sequence is LSVLFSYTILFYIHIFAFVLI. The Cytoplasmic portion of the chain corresponds to 315–339; the sequence is QLVAKNEPTHIICKIMGHYENANNL. A helical transmembrane segment spans residues 340-360; the sequence is LAVPTFPLSLLAPPTSFFKGV. T361 is a topological domain (lumenal). The chain crosses the membrane as a helical span at residues 362–382; it reads QQPLTFITYSAFILVTGIWFA. The Cytoplasmic portion of the chain corresponds to 383-421; sequence DKWQAISGSSARDVALEFKDQGITLMGRREQNVAKELNK. Residues 422–442 form a helical membrane-spanning segment; sequence VIPIAAVTGASVLSLITVIGE. Residues 443 to 449 are Lumenal-facing; that stretch reads SLGLKGK. A helical transmembrane segment spans residues 450–470; it reads AAGIVVGIAGGFSLLEVITIE. At 471–490 the chain is on the cytoplasmic side; it reads YQQSGGQSALNQVLGVPGAM.

This sequence belongs to the SecY/SEC61-alpha family. As to quaternary structure, component of the heterotrimeric Ssh1 complex, which is composed of SSH1, SBH2 and SSS1.

It localises to the endoplasmic reticulum membrane. Functionally, part of the Ssh1 complex, which probably is the major component of a channel-forming translocon complex that may function exclusively in the cotranslational pathway of protein endoplasmic reticulum (ER) import. The chain is Sec sixty-one protein homolog (SSH1) from Saccharomyces cerevisiae (strain ATCC 204508 / S288c) (Baker's yeast).